A 515-amino-acid chain; its full sequence is Fatty acyl-CoA reductase 2 (515 aa).

Over 1 to 464 (MSMIAAFYSN…KAKQHLRRLR (464 aa)) the chain is Cytoplasmic. The chain crosses the membrane as a helical span at residues 465–484 (NIHYLFNTALFLIIWRLLIA). Residues 485–515 (RSQMARNVWFFIVSFCYKFISYFRASSTLKV) lie on the Peroxisomal side of the membrane.

Belongs to the fatty acyl-CoA reductase family. In terms of tissue distribution, specifically expressed in the meibomian glands of the eyelid and the sebaceous glands of the skin. Also expressed in the brain where large quantities of ether lipids are synthesized.

It localises to the peroxisome membrane. It carries out the reaction a long-chain fatty acyl-CoA + 2 NADPH + 2 H(+) = a long-chain primary fatty alcohol + 2 NADP(+) + CoA. The catalysed reaction is hexadecanoyl-CoA + 2 NADPH + 2 H(+) = hexadecan-1-ol + 2 NADP(+) + CoA. It catalyses the reaction octadecanoyl-CoA + 2 NADPH + 2 H(+) = octadecan-1-ol + 2 NADP(+) + CoA. The enzyme catalyses a very long-chain fatty acyl-CoA + 2 NADPH + 2 H(+) = a very long-chain primary fatty alcohol + 2 NADP(+) + CoA. It carries out the reaction an ultra-long-chain fatty acyl-CoA + 2 NADPH + 2 H(+) = an ultra long-chain primary fatty alcohol + 2 NADP(+) + CoA. The catalysed reaction is eicosanoyl-CoA + 2 NADPH + 2 H(+) = eicosan-1-ol + 2 NADP(+) + CoA. It catalyses the reaction docosanoyl-CoA + 2 NADPH + 2 H(+) = docosan-1-ol + 2 NADP(+) + CoA. The enzyme catalyses tetracosanoyl-CoA + 2 NADPH + 2 H(+) = tetracosan-1-ol + 2 NADP(+) + CoA. It carries out the reaction hexacosanoyl-CoA + 2 NADPH + 2 H(+) = hexacosan-1-ol + 2 NADP(+) + CoA. The catalysed reaction is octacosanoyl-CoA + 2 NADPH + 2 H(+) = octacosan-1-ol + 2 NADP(+) + CoA. It catalyses the reaction triacontanoyl-CoA + 2 NADPH + 2 H(+) = triacontan-1-ol + 2 NADP(+) + CoA. The enzyme catalyses 18-methylnonadecanoyl-CoA + 2 NADPH + 2 H(+) = 18-methylnonadecan-1-ol + 2 NADP(+) + CoA. It carries out the reaction 20-methylheneicosanoyl-CoA + 2 NADPH + 2 H(+) = 20-methylheneicosan-1-ol + 2 NADP(+) + CoA. The catalysed reaction is 22-methyltricosanoyl-CoA + 2 NADPH + 2 H(+) = 22-methyltricosan-1-ol + 2 NADP(+) + CoA. It catalyses the reaction 24-methylpentacosanoyl-CoA + 2 NADPH + 2 H(+) = 24-methylpentacosan-1-ol + 2 NADP(+) + CoA. Functionally, catalyzes the reduction of saturated but not unsaturated C16 or C18 fatty acyl-CoA to fatty alcohols. A lower activity can be observed with shorter fatty acyl-CoA substrates. Can produce very long-chain and ultra long-chain FAls, regardless of whether they have a straight or branched chain. It may play a role in the production of ether lipids/plasmalogens and wax monoesters which synthesis requires fatty alcohols as substrates. In Mus musculus (Mouse), this protein is Fatty acyl-CoA reductase 2.